The primary structure comprises 258 residues: Imidazole glycerol phosphate synthase subunit HisF (258 aa).

Active-site residues include Asp11 and Asp130.

It belongs to the HisA/HisF family. In terms of assembly, heterodimer of HisH and HisF.

The protein resides in the cytoplasm. It carries out the reaction 5-[(5-phospho-1-deoxy-D-ribulos-1-ylimino)methylamino]-1-(5-phospho-beta-D-ribosyl)imidazole-4-carboxamide + L-glutamine = D-erythro-1-(imidazol-4-yl)glycerol 3-phosphate + 5-amino-1-(5-phospho-beta-D-ribosyl)imidazole-4-carboxamide + L-glutamate + H(+). It participates in amino-acid biosynthesis; L-histidine biosynthesis; L-histidine from 5-phospho-alpha-D-ribose 1-diphosphate: step 5/9. Its function is as follows. IGPS catalyzes the conversion of PRFAR and glutamine to IGP, AICAR and glutamate. The HisF subunit catalyzes the cyclization activity that produces IGP and AICAR from PRFAR using the ammonia provided by the HisH subunit. In Escherichia coli O1:K1 / APEC, this protein is Imidazole glycerol phosphate synthase subunit HisF.